We begin with the raw amino-acid sequence, 219 residues long: MQPSFWHDKWDAQQVGFHLSAVNPLLVKYWPQLELDANAQVFVPLCGKSLDMCFLAEQGHEVLGCELNELAVQQFYRENELAFDISTLAEHQRFHTEQVTIYQGDIFSLDAAEMPNTQAFYDRAALIAWPEEMRSAYARQLAKLVPANSTGLLITLDYPQAELNGPPFAVSDDWVQANLATDFEIERLSSEDVLSENPRFVNKQVSWLTESVYKLIRKG.

W10, L45, E66, and R123 together coordinate S-adenosyl-L-methionine.

It belongs to the class I-like SAM-binding methyltransferase superfamily. TPMT family.

It is found in the cytoplasm. It catalyses the reaction S-adenosyl-L-methionine + a thiopurine = S-adenosyl-L-homocysteine + a thiopurine S-methylether.. The polypeptide is Thiopurine S-methyltransferase (Shewanella pealeana (strain ATCC 700345 / ANG-SQ1)).